The sequence spans 425 residues: 5'-deoxyadenosine deaminase (425 aa).

The Zn(2+) site is built by H62 and H64. E91 and H183 together coordinate substrate. H210 contacts Zn(2+). Residues E213 and D298 each contribute to the substrate site. D298 serves as a coordination point for Zn(2+).

The protein belongs to the metallo-dependent hydrolases superfamily. MTA/SAH deaminase family. In terms of assembly, homotetramer. Requires Zn(2+) as cofactor.

The enzyme catalyses 5'-deoxyadenosine + H2O + H(+) = 5'-deoxyinosine + NH4(+). It catalyses the reaction S-adenosyl-L-homocysteine + H2O + H(+) = S-inosyl-L-homocysteine + NH4(+). The catalysed reaction is S-methyl-5'-thioadenosine + H2O + H(+) = S-methyl-5'-thioinosine + NH4(+). It carries out the reaction adenosine + H2O + H(+) = inosine + NH4(+). The protein operates within amino-acid biosynthesis; S-adenosyl-L-methionine biosynthesis. Catalyzes the deamination of three SAM-derived enzymatic products, namely 5'-deoxyadenosine, S-adenosyl-L-homocysteine, and 5'-methylthioadenosine, to produce the inosine analogs. Can also deaminate adenosine. The preferred substrate for this enzyme is 5'-deoxyadenosine, but all these substrates are efficiently deaminated. Likely functions in a S-adenosyl-L-methionine (SAM) recycling pathway from S-adenosyl-L-homocysteine (SAH) produced from SAM-dependent methylation reactions. May also be involved in the recycling of 5'-deoxyadenosine, whereupon the 5'-deoxyribose moiety of 5'-deoxyinosine is further metabolized to deoxyhexoses used for the biosynthesis of aromatic amino acids in methanogens. The sequence is that of 5'-deoxyadenosine deaminase from Methanosphaera stadtmanae (strain ATCC 43021 / DSM 3091 / JCM 11832 / MCB-3).